Reading from the N-terminus, the 299-residue chain is Ribonuclease 3-like protein 3 (299 aa).

In terms of domain architecture, RNase III spans Val-39–Asn-183. Glu-79, Asp-169, and Glu-172 together coordinate Mg(2+). The DRBM domain occupies His-209–Glu-273. The tract at residues Thr-274–Ser-299 is disordered. Residues Leu-275–Phe-291 are compositionally biased toward polar residues.

Requires Mg(2+) as cofactor. The cofactor is Mn(2+).

Functionally, cleaves double-stranded RNA (dsRNA). The sequence is that of Ribonuclease 3-like protein 3 from Oryza sativa subsp. japonica (Rice).